Here is a 156-residue protein sequence, read N- to C-terminus: Ribosomal RNA large subunit methyltransferase H (156 aa).

Residues leucine 73, glycine 104, and 123 to 128 contribute to the S-adenosyl-L-methionine site; that span reads LSPLTL.

This sequence belongs to the RNA methyltransferase RlmH family. Homodimer.

It is found in the cytoplasm. The catalysed reaction is pseudouridine(1915) in 23S rRNA + S-adenosyl-L-methionine = N(3)-methylpseudouridine(1915) in 23S rRNA + S-adenosyl-L-homocysteine + H(+). Its function is as follows. Specifically methylates the pseudouridine at position 1915 (m3Psi1915) in 23S rRNA. The polypeptide is Ribosomal RNA large subunit methyltransferase H (Pseudoalteromonas atlantica (strain T6c / ATCC BAA-1087)).